The chain runs to 283 residues: Pantothenate synthetase (283 aa).

30 to 37 provides a ligand contact to ATP; the sequence is MGTLHDGH. His-37 serves as the catalytic Proton donor. Gln-61 provides a ligand contact to (R)-pantoate. A beta-alanine-binding site is contributed by Gln-61. An ATP-binding site is contributed by 148 to 151; the sequence is GLKD. Gln-154 lines the (R)-pantoate pocket. 185 to 188 serves as a coordination point for ATP; it reads MSSR.

It belongs to the pantothenate synthetase family. As to quaternary structure, homodimer.

Its subcellular location is the cytoplasm. The enzyme catalyses (R)-pantoate + beta-alanine + ATP = (R)-pantothenate + AMP + diphosphate + H(+). It participates in cofactor biosynthesis; (R)-pantothenate biosynthesis; (R)-pantothenate from (R)-pantoate and beta-alanine: step 1/1. In terms of biological role, catalyzes the condensation of pantoate with beta-alanine in an ATP-dependent reaction via a pantoyl-adenylate intermediate. In Leptospira biflexa serovar Patoc (strain Patoc 1 / Ames), this protein is Pantothenate synthetase.